A 193-amino-acid polypeptide reads, in one-letter code: uncharacterized protein (193 aa).

Transmembrane regions (helical) follow at residues 40–56 (LYIA…LKLI), 63–79 (AAGL…SSLC), 86–110 (CSGY…IVSC), and 117–138 (FIFP…FQIY). Positions 158-193 (TTTKLSRSSSAPDLSCPSLSTQPTSPNQSLSAYKKY) are disordered.

The protein belongs to the chlamydial CPn_0442/CT_006/TC_0274 family.

The protein localises to the cell membrane. This is an uncharacterized protein from Chlamydia muridarum (strain MoPn / Nigg).